A 389-amino-acid chain; its full sequence is MAASFPEGVPETEDGKRPQFGHRFLSDPARVFHHNAWDNVKWSEEQAAAAERKVQENSSPLVCPEKQVDYEVNAHKYWDDFYRIHENGFFKDRHWLFTEFPELAPSHSHLTGVPLEKQRSDVCEDGPGLTAEQHKCSCASPGCETQVPPLEEPVTQKLGHLEISGEEFPGSSATYRILEVGCGVGNTVFPILQTNNNPNLFVYCCDFSATAIELLKTNSQYDPSRCYAFVHDLCDEDQSYPVPEDSLDVIVLIFVLSAIVPDKMQKAISKLSRLLKPGGVMLLRDYGRYDMAQLRFKKGQCLSGNFYVRGDGTRVYFFTQGELDTLFTAAGLEKVQNLVDRRLQVNRGKQLTMYRVWIQCKYSKPLALRSSQHVPIPHATESSSHSGLL.

Residues 1–20 (MAASFPEGVPETEDGKRPQF) form a disordered region. Trp-78, Tyr-82, Gly-181, Asp-206, Asp-232, Leu-233, and Ile-253 together coordinate S-adenosyl-L-methionine.

The protein belongs to the methyltransferase superfamily. METL family. In terms of assembly, monomer. Interacts with DALRD3.

It localises to the cytoplasm. It catalyses the reaction cytidine(32) in tRNA(Thr) + S-adenosyl-L-methionine = N(3)-methylcytidine(32) in tRNA(Thr) + S-adenosyl-L-homocysteine + H(+). The catalysed reaction is cytidine(32) in tRNA(Arg)(CCU) + S-adenosyl-L-methionine = N(3)-methylcytidine(32) in tRNA(Arg)(CCU) + S-adenosyl-L-homocysteine + H(+). Its function is as follows. S-adenosyl-L-methionine-dependent methyltransferase that mediates N(3)-methylcytidine modification of residue 32 of the tRNA anticodon loop of tRNA(Thr)(UGU) and tRNA(Arg)(CCU). N(3)-methylcytidine methylation by METTL2 requires the N6-threonylcarbamoylation of tRNA (t6A37) by the EKC/KEOPS complex as prerequisite. In Mus musculus (Mouse), this protein is tRNA N(3)-cytidine methyltransferase METTL2.